A 124-amino-acid chain; its full sequence is Large ribosomal subunit protein bL12 (124 aa).

The protein belongs to the bacterial ribosomal protein bL12 family. Homodimer. Part of the ribosomal stalk of the 50S ribosomal subunit. Forms a multimeric L10(L12)X complex, where L10 forms an elongated spine to which 2 to 4 L12 dimers bind in a sequential fashion. Binds GTP-bound translation factors.

In terms of biological role, forms part of the ribosomal stalk which helps the ribosome interact with GTP-bound translation factors. Is thus essential for accurate translation. This is Large ribosomal subunit protein bL12 from Burkholderia cenocepacia (strain ATCC BAA-245 / DSM 16553 / LMG 16656 / NCTC 13227 / J2315 / CF5610) (Burkholderia cepacia (strain J2315)).